The sequence spans 44 residues: U4-ctenitoxin-Pk1a (44 aa).

Cystine bridges form between Cys4/Cys18, Cys11/Cys24, Cys15/Cys42, Cys17/Cys33, and Cys26/Cys31.

In terms of tissue distribution, expressed by the venom gland.

It localises to the secreted. In terms of biological role, neurotoxin. Causes spastic paralysis and death in mice within 10 minutes at dose levels of 3 ug per mouse. The polypeptide is U4-ctenitoxin-Pk1a (Phoneutria keyserlingi (Brazilian wandering spider)).